A 651-amino-acid polypeptide reads, in one-letter code: Beta-glucuronidase (651 aa).

Positions 1 to 22 are cleaved as a signal peptide; the sequence is MARGSAVAWAAFGPLLWGCALG. Residues N173, N190, N272, and N420 are each glycosylated (N-linked (GlcNAc...) asparagine). Residue E451 is the Proton donor of the active site. N-linked (GlcNAc...) asparagine glycosylation is present at N631.

Belongs to the glycosyl hydrolase 2 family. Homotetramer.

The protein localises to the lysosome. The catalysed reaction is a beta-D-glucuronoside + H2O = D-glucuronate + an alcohol. Inhibited by L-aspartic acid. In terms of biological role, plays an important role in the degradation of dermatan and keratan sulfates. The sequence is that of Beta-glucuronidase (GUSB) from Pongo abelii (Sumatran orangutan).